Reading from the N-terminus, the 132-residue chain is Small ribosomal subunit protein uS13 (132 aa).

A compositionally biased stretch (basic residues) spans 101–125 (RGLPVRGQRTKTNARTRKGPRKTVA). The interval 101–132 (RGLPVRGQRTKTNARTRKGPRKTVANKKIETR) is disordered.

Belongs to the universal ribosomal protein uS13 family. Part of the 30S ribosomal subunit. Forms a loose heterodimer with protein S19. Forms two bridges to the 50S subunit in the 70S ribosome.

Its function is as follows. Located at the top of the head of the 30S subunit, it contacts several helices of the 16S rRNA. In the 70S ribosome it contacts the 23S rRNA (bridge B1a) and protein L5 of the 50S subunit (bridge B1b), connecting the 2 subunits; these bridges are implicated in subunit movement. Contacts the tRNAs in the A and P-sites. The protein is Small ribosomal subunit protein uS13 of Ureaplasma urealyticum serovar 10 (strain ATCC 33699 / Western).